The sequence spans 503 residues: UDP-N-acetylmuramate--L-alanine ligase (503 aa).

120 to 126 (GTHGKTS) serves as a coordination point for ATP.

It belongs to the MurCDEF family.

The protein resides in the cytoplasm. The enzyme catalyses UDP-N-acetyl-alpha-D-muramate + L-alanine + ATP = UDP-N-acetyl-alpha-D-muramoyl-L-alanine + ADP + phosphate + H(+). It participates in cell wall biogenesis; peptidoglycan biosynthesis. Functionally, cell wall formation. This chain is UDP-N-acetylmuramate--L-alanine ligase, found in Rhodococcus jostii (strain RHA1).